Consider the following 477-residue polypeptide: Bile acid transporter (477 aa).

The next 15 helical transmembrane spans lie at 13-33, 50-70, 83-103, 107-127, 139-159, 166-186, 206-226, 228-248, 272-292, 301-321, 333-353, 359-379, 381-401, 406-426, and 444-464; these read FVPF…TAVL, WISL…GKLG, IVIF…IFML, FIVG…IVTE, LYML…GLIM, VMMW…TFSI, LVVV…NIGW, STAF…LVMV, LILF…IVFV, IISS…SVII, VLTF…LFKA, IFAA…TIFM, VALS…YGLF, APFG…ANIA, and ISSI…GIIL.

Belongs to the major facilitator superfamily.

It is found in the cell membrane. It functions in the pathway lipid metabolism; bile acid degradation. This Clostridium scindens (strain JCM 10418 / VPI 12708) protein is Bile acid transporter (baiG).